The primary structure comprises 608 residues: Phosphogluconate dehydratase (608 aa).

[4Fe-4S] cluster-binding residues include cysteine 154 and cysteine 221.

The protein belongs to the IlvD/Edd family. The cofactor is [4Fe-4S] cluster.

The enzyme catalyses 6-phospho-D-gluconate = 2-dehydro-3-deoxy-6-phospho-D-gluconate + H2O. It functions in the pathway carbohydrate metabolism; Entner-Doudoroff pathway. Functionally, catalyzes the dehydration of 6-phospho-D-gluconate to 2-dehydro-3-deoxy-6-phospho-D-gluconate. The sequence is that of Phosphogluconate dehydratase from Helicobacter pylori (strain J99 / ATCC 700824) (Campylobacter pylori J99).